A 455-amino-acid chain; its full sequence is Bifunctional protein GlmU (455 aa).

Residues 1–226 (MALNVVILAA…AIEVEGANNR (226 aa)) are pyrophosphorylase. Residues 8–11 (LAAG), K22, Q73, 78–79 (GT), 100–102 (YGD), G137, E151, N166, and N224 each bind UDP-N-acetyl-alpha-D-glucosamine. Mg(2+) is bound at residue D102. Residue N224 coordinates Mg(2+). Positions 227–247 (VQLAQLERAYQARAAEKLMLE) are linker. The N-acetyltransferase stretch occupies residues 248 to 455 (GANLRDPARL…WARPVKKPKS (208 aa)). UDP-N-acetyl-alpha-D-glucosamine contacts are provided by R330 and K348. Catalysis depends on H360, which acts as the Proton acceptor. UDP-N-acetyl-alpha-D-glucosamine-binding residues include Y363 and N374. Acetyl-CoA-binding positions include A377, 383–384 (NY), S402, A420, and R437.

It in the N-terminal section; belongs to the N-acetylglucosamine-1-phosphate uridyltransferase family. This sequence in the C-terminal section; belongs to the transferase hexapeptide repeat family. Homotrimer. Requires Mg(2+) as cofactor.

Its subcellular location is the cytoplasm. The catalysed reaction is alpha-D-glucosamine 1-phosphate + acetyl-CoA = N-acetyl-alpha-D-glucosamine 1-phosphate + CoA + H(+). It carries out the reaction N-acetyl-alpha-D-glucosamine 1-phosphate + UTP + H(+) = UDP-N-acetyl-alpha-D-glucosamine + diphosphate. Its pathway is nucleotide-sugar biosynthesis; UDP-N-acetyl-alpha-D-glucosamine biosynthesis; N-acetyl-alpha-D-glucosamine 1-phosphate from alpha-D-glucosamine 6-phosphate (route II): step 2/2. It participates in nucleotide-sugar biosynthesis; UDP-N-acetyl-alpha-D-glucosamine biosynthesis; UDP-N-acetyl-alpha-D-glucosamine from N-acetyl-alpha-D-glucosamine 1-phosphate: step 1/1. The protein operates within bacterial outer membrane biogenesis; LPS lipid A biosynthesis. Its function is as follows. Catalyzes the last two sequential reactions in the de novo biosynthetic pathway for UDP-N-acetylglucosamine (UDP-GlcNAc). The C-terminal domain catalyzes the transfer of acetyl group from acetyl coenzyme A to glucosamine-1-phosphate (GlcN-1-P) to produce N-acetylglucosamine-1-phosphate (GlcNAc-1-P), which is converted into UDP-GlcNAc by the transfer of uridine 5-monophosphate (from uridine 5-triphosphate), a reaction catalyzed by the N-terminal domain. The protein is Bifunctional protein GlmU of Shewanella sediminis (strain HAW-EB3).